The sequence spans 214 residues: ATP-dependent Clp protease proteolytic subunit (214 aa).

Residue Ser-114 is the Nucleophile of the active site. His-139 is a catalytic residue.

The protein belongs to the peptidase S14 family. In terms of assembly, fourteen ClpP subunits assemble into 2 heptameric rings which stack back to back to give a disk-like structure with a central cavity, resembling the structure of eukaryotic proteasomes.

It localises to the cytoplasm. It carries out the reaction Hydrolysis of proteins to small peptides in the presence of ATP and magnesium. alpha-casein is the usual test substrate. In the absence of ATP, only oligopeptides shorter than five residues are hydrolyzed (such as succinyl-Leu-Tyr-|-NHMec, and Leu-Tyr-Leu-|-Tyr-Trp, in which cleavage of the -Tyr-|-Leu- and -Tyr-|-Trp bonds also occurs).. Functionally, cleaves peptides in various proteins in a process that requires ATP hydrolysis. Has a chymotrypsin-like activity. Plays a major role in the degradation of misfolded proteins. The chain is ATP-dependent Clp protease proteolytic subunit from Nitrosomonas eutropha (strain DSM 101675 / C91 / Nm57).